The sequence spans 77 residues: uncharacterized protein (77 aa).

A Peptidase A1 domain is found at 1-77 (MAFERQGKIE…VAILDGKLVW (77 aa)).

This is an uncharacterized protein from Saccharomyces cerevisiae (strain ATCC 204508 / S288c) (Baker's yeast).